The following is an 856-amino-acid chain: Envelope glycoprotein gp160 (856 aa).

The N-terminal stretch at 1–32 is a signal peptide; sequence MRVKEKYQHLRRWGWRWGTMLLGMLMICSATE. Residues 33–684 lie on the Extracellular side of the membrane; that stretch reads KLWVTVYYGV…ITNWLWYIKI (652 aa). A disulfide bond links cysteine 54 and cysteine 74. 18 N-linked (GlcNAc...) asparagine; by host glycosylation sites follow: asparagine 88, asparagine 136, asparagine 141, asparagine 156, asparagine 160, asparagine 186, asparagine 197, asparagine 230, asparagine 234, asparagine 241, asparagine 262, asparagine 276, asparagine 289, asparagine 295, asparagine 301, asparagine 332, asparagine 339, and asparagine 356. 5 disulfides stabilise this stretch: cysteine 119/cysteine 205, cysteine 126/cysteine 196, cysteine 131/cysteine 157, cysteine 218/cysteine 247, and cysteine 228/cysteine 239. Residues 131–156 form a V1 region; sequence CTDLKNDTNTNSSSGGMIMEKGEIKN. A V2 region spans residues 157–196; it reads CSFNISTSIRGKVQKEYAFFYKHDIIPIDNDTTSYTLTSC. Residues 296-330 are V3; the sequence is CTRPNNNTRKRIRIQRGPGRTFVTIGKIGNMRQAH. Cysteine 296 and cysteine 331 are oxidised to a cystine. Residues 364 to 374 form a CD4-binding loop region; that stretch reads SSGGDLEIVTH. 2 disulfides stabilise this stretch: cysteine 378/cysteine 445 and cysteine 385/cysteine 418. A V4 region spans residues 385–418; the sequence is CNSTQLFNSTWFNSTWSTEGSNNTEGSDTITLPC. 6 N-linked (GlcNAc...) asparagine; by host glycosylation sites follow: asparagine 386, asparagine 392, asparagine 397, asparagine 406, asparagine 448, and asparagine 463. V5 stretches follow at residues 461–471 and 463–471; these read NNNGSEIFRPG and NGSEIFRPG. The interval 512 to 532 is fusion peptide; the sequence is AVGIGALFLGFLGAAGSTMGA. Positions 574-592 are immunosuppression; sequence KQLQARILAVERYLKDQQL. A disulfide bond links cysteine 598 and cysteine 604. 5 N-linked (GlcNAc...) asparagine; by host glycosylation sites follow: asparagine 611, asparagine 616, asparagine 624, asparagine 637, and asparagine 674. The stretch at 633-667 forms a coiled coil; it reads REINNYTSLIHSLIEESQNQQEKNEQELLELDKWA. Positions 662 to 683 are MPER; binding to GalCer; the sequence is ELDKWASLWNWFNITNWLWYIK. The helical transmembrane segment at 685 to 705 threads the bilayer; that stretch reads FIMIVGGLVGLRIVFAVLSIV. Residues 706–856 are Cytoplasmic-facing; the sequence is NRVRQGHSPL…IRQGLERILL (151 aa). Positions 715-742 are disordered; sequence LSFQTHLPTPGGPDRPEGIEEEGGERDR. Residues cysteine 764 and cysteine 837 are each lipidated (S-palmitoyl cysteine; by host). The Di-leucine internalization motif motif lies at 855-856; that stretch reads LL.

Belongs to the HIV-1 env protein family. In terms of assembly, the mature envelope protein (Env) consists of a homotrimer of non-covalently associated gp120-gp41 heterodimers. The resulting complex protrudes from the virus surface as a spike. There seems to be as few as 10 spikes on the average virion. Interacts with host CD4, CCR5 and CXCR4. Gp120 also interacts with the C-type lectins CD209/DC-SIGN and CLEC4M/DC-SIGNR (collectively referred to as DC-SIGN(R)). Gp120 and gp41 interact with GalCer. Gp120 interacts with host ITGA4/ITGB7 complex; on CD4+ T-cells, this interaction results in rapid activation of integrin ITGAL/LFA-1, which facilitates efficient cell-to-cell spreading of HIV-1. Gp120 interacts with cell-associated heparan sulfate; this interaction increases virus infectivity on permissive cells and may be involved in infection of CD4- cells. As to quaternary structure, the mature envelope protein (Env) consists of a homotrimer of non-covalently associated gp120-gp41 heterodimers. The resulting complex protrudes from the virus surface as a spike. There seems to be as few as 10 spikes on the average virion. In terms of processing, highly glycosylated by host. The high number of glycan on the protein is reffered to as 'glycan shield' because it contributes to hide protein sequence from adaptive immune system. Palmitoylation of the transmembrane protein and of Env polyprotein (prior to its proteolytic cleavage) is essential for their association with host cell membrane lipid rafts. Palmitoylation is therefore required for envelope trafficking to classical lipid rafts, but not for viral replication. Post-translationally, specific enzymatic cleavages in vivo yield mature proteins. Envelope glycoproteins are synthesized as an inactive precursor that is heavily N-glycosylated and processed likely by host cell furin in the Golgi to yield the mature SU and TM proteins. The cleavage site between SU and TM requires the minimal sequence [KR]-X-[KR]-R. About 2 of the 9 disulfide bonds of gp41 are reduced by P4HB/PDI, following binding to CD4 receptor.

Its subcellular location is the virion membrane. The protein localises to the host cell membrane. It localises to the host endosome membrane. Its function is as follows. Oligomerizes in the host endoplasmic reticulum into predominantly trimers. In a second time, gp160 transits in the host Golgi, where glycosylation is completed. The precursor is then proteolytically cleaved in the trans-Golgi and thereby activated by cellular furin or furin-like proteases to produce gp120 and gp41. Functionally, attaches the virus to the host lymphoid cell by binding to the primary receptor CD4. This interaction induces a structural rearrangement creating a high affinity binding site for a chemokine coreceptor like CXCR4 and/or CCR5. Acts as a ligand for CD209/DC-SIGN and CLEC4M/DC-SIGNR, which are respectively found on dendritic cells (DCs), and on endothelial cells of liver sinusoids and lymph node sinuses. These interactions allow capture of viral particles at mucosal surfaces by these cells and subsequent transmission to permissive cells. HIV subverts the migration properties of dendritic cells to gain access to CD4+ T-cells in lymph nodes. Virus transmission to permissive T-cells occurs either in trans (without DCs infection, through viral capture and transmission), or in cis (following DCs productive infection, through the usual CD4-gp120 interaction), thereby inducing a robust infection. In trans infection, bound virions remain infectious over days and it is proposed that they are not degraded, but protected in non-lysosomal acidic organelles within the DCs close to the cell membrane thus contributing to the viral infectious potential during DCs' migration from the periphery to the lymphoid tissues. On arrival at lymphoid tissues, intact virions recycle back to DCs' cell surface allowing virus transmission to CD4+ T-cells. In terms of biological role, acts as a class I viral fusion protein. Under the current model, the protein has at least 3 conformational states: pre-fusion native state, pre-hairpin intermediate state, and post-fusion hairpin state. During fusion of viral and target intracellular membranes, the coiled coil regions (heptad repeats) assume a trimer-of-hairpins structure, positioning the fusion peptide in close proximity to the C-terminal region of the ectodomain. The formation of this structure appears to drive apposition and subsequent fusion of viral and target cell membranes. Complete fusion occurs in host cell endosomes and is dynamin-dependent, however some lipid transfer might occur at the plasma membrane. The virus undergoes clathrin-dependent internalization long before endosomal fusion, thus minimizing the surface exposure of conserved viral epitopes during fusion and reducing the efficacy of inhibitors targeting these epitopes. Membranes fusion leads to delivery of the nucleocapsid into the cytoplasm. The chain is Envelope glycoprotein gp160 from Homo sapiens (Human).